The primary structure comprises 246 residues: TVP38/TMEM64 family membrane protein MT0653 (246 aa).

5 consecutive transmembrane segments (helical) span residues 19–39, 57–77, 83–103, 157–177, and 196–216; these read LVVFAGFLVGMFYLVAATDVI, LTYVVVSAVLGALFVPGPILA, LFGPLVGVFVTLGATVGTAVV, AFGTFGVPLWQMAVGAFIGSA, and LLASCAIAVWCVTAIIGAFAA.

It belongs to the TVP38/TMEM64 family.

The protein localises to the cell membrane. This chain is TVP38/TMEM64 family membrane protein MT0653, found in Mycobacterium tuberculosis (strain CDC 1551 / Oshkosh).